The chain runs to 200 residues: GTP cyclohydrolase 1 (200 aa).

Positions 87, 90, and 158 each coordinate Zn(2+).

Belongs to the GTP cyclohydrolase I family. In terms of assembly, toroid-shaped homodecamer, composed of two pentamers of five dimers.

The enzyme catalyses GTP + H2O = 7,8-dihydroneopterin 3'-triphosphate + formate + H(+). The protein operates within cofactor biosynthesis; 7,8-dihydroneopterin triphosphate biosynthesis; 7,8-dihydroneopterin triphosphate from GTP: step 1/1. The protein is GTP cyclohydrolase 1 of Xanthomonas axonopodis pv. citri (strain 306).